A 478-amino-acid chain; its full sequence is Noelin-2 (478 aa).

The N-terminal stretch at 1–16 is a signal peptide; it reads MSVPLLKIGAVLSTMA. N-linked (GlcNAc...) asparagine glycans are attached at residues N33, N98, N179, N299, N334, N423, and N465. Coiled coils occupy residues 86–109 and 160–218; these read SREL…LELR and LEQY…QKLG. Positions 218-470 constitute an Olfactomedin-like domain; that stretch reads GCGKLTGVSN…QVLYNVTLFH (253 aa). C219 and C401 are joined by a disulfide.

Peripherally associated with AMPAR complex. AMPAR complex consists of an inner core made of 4 pore-forming GluA/GRIA proteins (GRIA1, GRIA2, GRIA3 and GRIA4) and 4 major auxiliary subunits arranged in a twofold symmetry. One of the two pairs of distinct binding sites is occupied either by CNIH2, CNIH3 or CACNG2, CACNG3. The other harbors CACNG2, CACNG3, CACNG4, CACNG8 or GSG1L. This inner core of AMPAR complex is complemented by outer core constituents binding directly to the GluA/GRIA proteins at sites distinct from the interaction sites of the inner core constituents. Outer core constituents include at least PRRT1, PRRT2, CKAMP44/SHISA9, FRRS1L and NRN1. The proteins of the inner and outer core serve as a platform for other, more peripherally associated AMPAR constituents, including OLFM2. Alone or in combination, these auxiliary subunits control the gating and pharmacology of the AMPAR complex and profoundly impact their biogenesis and protein processing. Interacts with GRIA2. Interacts with OLFM1 and OLFM3. Interacts with SRF; the interaction promotes dissociation of SRF from the transcriptional repressor HEY2. Interacts with RUNX2. Expressed in the brain (at protein level). Expressed in carotid arteries and the aorta, mainly in aortic SMCs.

The protein localises to the secreted. It is found in the synapse. The protein resides in the membrane. It localises to the nucleus. Its subcellular location is the cytoplasm. Involved in transforming growth factor beta (TGF-beta)-induced smooth muscle differentiation. TGF-beta induces expression and nuclear translocation of OLFM2 where it binds to SRF, causing its dissociation from the transcriptional repressor HEY2/HERP1 and facilitating binding of SRF to target genes. Plays a role in AMPAR complex organization. Is a regulator of vascular smooth-muscle cell (SMC) phenotypic switching, that acts by promoting RUNX2 and inhibiting MYOCD binding to SRF. SMC phenotypic switching is the process through which vascular SMCs undergo transition between a quiescent contractile phenotype and a proliferative synthetic phenotype in response to pathological stimuli. SMC phenotypic plasticity is essential for vascular development and remodeling. This is Noelin-2 (Olfm2) from Rattus norvegicus (Rat).